A 432-amino-acid chain; its full sequence is 3-phosphoshikimate 1-carboxyvinyltransferase (432 aa).

Positions 23, 24, and 28 each coordinate 3-phosphoshikimate. Position 23 (Lys23) interacts with phosphoenolpyruvate. 2 residues coordinate phosphoenolpyruvate: Gly95 and Arg123. Ser167, Gln169, Asp317, and Lys344 together coordinate 3-phosphoshikimate. Gln169 provides a ligand contact to phosphoenolpyruvate. The active-site Proton acceptor is the Asp317. Arg348 and Arg390 together coordinate phosphoenolpyruvate.

The protein belongs to the EPSP synthase family. In terms of assembly, monomer.

The protein resides in the cytoplasm. It catalyses the reaction 3-phosphoshikimate + phosphoenolpyruvate = 5-O-(1-carboxyvinyl)-3-phosphoshikimate + phosphate. It functions in the pathway metabolic intermediate biosynthesis; chorismate biosynthesis; chorismate from D-erythrose 4-phosphate and phosphoenolpyruvate: step 6/7. Functionally, catalyzes the transfer of the enolpyruvyl moiety of phosphoenolpyruvate (PEP) to the 5-hydroxyl of shikimate-3-phosphate (S3P) to produce enolpyruvyl shikimate-3-phosphate and inorganic phosphate. The polypeptide is 3-phosphoshikimate 1-carboxyvinyltransferase (Staphylococcus aureus (strain JH9)).